An 893-amino-acid polypeptide reads, in one-letter code: 104 kDa microneme/rhoptry antigen (893 aa).

Positions 1 to 19 (MKFLVLLFNILCLFPILGA) are cleaved as a signal peptide. Disordered regions lie at residues 492–666 (SKKK…FDPK), 681–799 (KTKE…PTGK), and 818–873 (KEHM…RKPD). 2 stretches are compositionally biased toward basic and acidic residues: residues 525–565 (SESK…EHKP) and 573–591 (KRPE…ESPK). Over residues 595–606 (RPVSPQRPVSPK) the composition is skewed to low complexity. 3 stretches are compositionally biased toward basic and acidic residues: residues 731–755 (EEVK…DSPT), 788–797 (EAGRILRDPT), and 818–830 (KEHM…KIVV). Residues 831 to 841 (DDDGTEADDED) show a composition bias toward acidic residues. A compositionally biased stretch (basic residues) spans 851–869 (STVRRRRPRPKKSSKSSKP). Asp-873 carries GPI-anchor amidated aspartate lipidation. Residues 874–893 (SAFVPSIIFIFLVSLIVGIL) constitute a propeptide, removed in mature form.

It is found in the cell membrane. The polypeptide is 104 kDa microneme/rhoptry antigen (Theileria annulata).